Consider the following 470-residue polypeptide: Tert-butanol monooxygenase / tert-amyl alcohol desaturase oxygenase subunit (470 aa).

In terms of domain architecture, Rieske spans 51–155 (WQPVCLSQEL…AFERNGLVFA (105 aa)). [2Fe-2S] cluster contacts are provided by C91, H93, C110, and H113.

It belongs to the bacterial ring-hydroxylating dioxygenase alpha subunit family. In terms of assembly, this two-component enzyme is composed of an oxygenase (MdpJ) and a reductase (MdpK). It depends on [2Fe-2S] cluster as a cofactor.

The enzyme catalyses tert-butanol + NADPH + O2 + H(+) = 2-methylpropane-1,2-diol + NADP(+) + H2O. It catalyses the reaction 2-methylbutan-2-ol + NADPH + O2 + H(+) = 3-hydroxy-3-methylbut-1-ene + NADP(+) + 2 H2O. In terms of biological role, oxygenase component of a two-component system involved in the degradation of tertiary alcohols such as tert-butyl alcohol (TBA) and tert-amyl alcohol (TAA). In the presence of TBA, catalyzes the hydroxylation of TBA to 2-methylpropane-1,2-diol. In the presence of TAA, functions as a desaturase, enabling the degradation of TAA and resulting in the formation of the hemiterpene 3-hydroxy-3-methylbut-1-ene. The specificity of the catalysis depends strongly on the molecule structure of the substrate, allowing either hydroxylation or desaturation reactions. Also catalyzes the desaturation of the tertiary alcohol 3-methyl-3-pentanol (a C6 homolog of TBA and TAA) to 3-methyl-1-penten-3-ol, with lower efficiency. In addition, can transform some secondary alcohols, including the hydroxylation of 2-propanol to 1,2-propanediol, and the desaturation of 2-butanol, 3-methyl-2-butanol and 3-pentanol. This Aquincola tertiaricarbonis protein is Tert-butanol monooxygenase / tert-amyl alcohol desaturase oxygenase subunit.